Here is a 245-residue protein sequence, read N- to C-terminus: tRNA pseudouridine synthase A (245 aa).

D52 (nucleophile) is an active-site residue. A substrate-binding site is contributed by Y111.

This sequence belongs to the tRNA pseudouridine synthase TruA family. As to quaternary structure, homodimer.

The enzyme catalyses uridine(38/39/40) in tRNA = pseudouridine(38/39/40) in tRNA. Formation of pseudouridine at positions 38, 39 and 40 in the anticodon stem and loop of transfer RNAs. The chain is tRNA pseudouridine synthase A from Rickettsia typhi (strain ATCC VR-144 / Wilmington).